The primary structure comprises 287 residues: Acetyl-coenzyme A carboxylase carboxyl transferase subunit beta (287 aa).

The region spanning 25–287 (VWTKCSACEQ…KMLNTHVIEE (263 aa)) is the CoA carboxyltransferase N-terminal domain. Zn(2+)-binding residues include C29, C32, C48, and C51. Residues 29-51 (CSACEQVLYRAELERNLEVCPKC) form a C4-type zinc finger.

This sequence belongs to the AccD/PCCB family. In terms of assembly, acetyl-CoA carboxylase is a heterohexamer composed of biotin carboxyl carrier protein (AccB), biotin carboxylase (AccC) and two subunits each of ACCase subunit alpha (AccA) and ACCase subunit beta (AccD). It depends on Zn(2+) as a cofactor.

It is found in the cytoplasm. The enzyme catalyses N(6)-carboxybiotinyl-L-lysyl-[protein] + acetyl-CoA = N(6)-biotinyl-L-lysyl-[protein] + malonyl-CoA. It functions in the pathway lipid metabolism; malonyl-CoA biosynthesis; malonyl-CoA from acetyl-CoA: step 1/1. In terms of biological role, component of the acetyl coenzyme A carboxylase (ACC) complex. Biotin carboxylase (BC) catalyzes the carboxylation of biotin on its carrier protein (BCCP) and then the CO(2) group is transferred by the transcarboxylase to acetyl-CoA to form malonyl-CoA. The polypeptide is Acetyl-coenzyme A carboxylase carboxyl transferase subunit beta (Aeromonas hydrophila subsp. hydrophila (strain ATCC 7966 / DSM 30187 / BCRC 13018 / CCUG 14551 / JCM 1027 / KCTC 2358 / NCIMB 9240 / NCTC 8049)).